Reading from the N-terminus, the 288-residue chain is Phosphatidylserine decarboxylase proenzyme (288 aa).

Residues Asp-89, His-146, and Ser-252 each act as charge relay system; for autoendoproteolytic cleavage activity in the active site. The active-site Schiff-base intermediate with substrate; via pyruvic acid; for decarboxylase activity is the Ser-252. Ser-252 carries the post-translational modification Pyruvic acid (Ser); by autocatalysis.

The protein belongs to the phosphatidylserine decarboxylase family. PSD-B subfamily. Prokaryotic type I sub-subfamily. Heterodimer of a large membrane-associated beta subunit and a small pyruvoyl-containing alpha subunit. Pyruvate is required as a cofactor. Post-translationally, is synthesized initially as an inactive proenzyme. Formation of the active enzyme involves a self-maturation process in which the active site pyruvoyl group is generated from an internal serine residue via an autocatalytic post-translational modification. Two non-identical subunits are generated from the proenzyme in this reaction, and the pyruvate is formed at the N-terminus of the alpha chain, which is derived from the carboxyl end of the proenzyme. The autoendoproteolytic cleavage occurs by a canonical serine protease mechanism, in which the side chain hydroxyl group of the serine supplies its oxygen atom to form the C-terminus of the beta chain, while the remainder of the serine residue undergoes an oxidative deamination to produce ammonia and the pyruvoyl prosthetic group on the alpha chain. During this reaction, the Ser that is part of the protease active site of the proenzyme becomes the pyruvoyl prosthetic group, which constitutes an essential element of the active site of the mature decarboxylase.

The protein localises to the cell membrane. The enzyme catalyses a 1,2-diacyl-sn-glycero-3-phospho-L-serine + H(+) = a 1,2-diacyl-sn-glycero-3-phosphoethanolamine + CO2. It functions in the pathway phospholipid metabolism; phosphatidylethanolamine biosynthesis; phosphatidylethanolamine from CDP-diacylglycerol: step 2/2. Its function is as follows. Catalyzes the formation of phosphatidylethanolamine (PtdEtn) from phosphatidylserine (PtdSer). The sequence is that of Phosphatidylserine decarboxylase proenzyme from Shewanella frigidimarina (strain NCIMB 400).